We begin with the raw amino-acid sequence, 205 residues long: Thiamine-phosphate synthase (205 aa).

4-amino-2-methyl-5-(diphosphooxymethyl)pyrimidine is bound by residues 37 to 41 (QVREK) and Asn-69. Mg(2+) contacts are provided by Asp-70 and Asp-89. Ser-108 is a 4-amino-2-methyl-5-(diphosphooxymethyl)pyrimidine binding site. Position 134 to 136 (134 to 136 (TGS)) interacts with 2-[(2R,5Z)-2-carboxy-4-methylthiazol-5(2H)-ylidene]ethyl phosphate. Lys-137 is a binding site for 4-amino-2-methyl-5-(diphosphooxymethyl)pyrimidine. 2-[(2R,5Z)-2-carboxy-4-methylthiazol-5(2H)-ylidene]ethyl phosphate-binding positions include Gly-165 and 185-186 (IS).

Belongs to the thiamine-phosphate synthase family. It depends on Mg(2+) as a cofactor.

It carries out the reaction 2-[(2R,5Z)-2-carboxy-4-methylthiazol-5(2H)-ylidene]ethyl phosphate + 4-amino-2-methyl-5-(diphosphooxymethyl)pyrimidine + 2 H(+) = thiamine phosphate + CO2 + diphosphate. The catalysed reaction is 2-(2-carboxy-4-methylthiazol-5-yl)ethyl phosphate + 4-amino-2-methyl-5-(diphosphooxymethyl)pyrimidine + 2 H(+) = thiamine phosphate + CO2 + diphosphate. It catalyses the reaction 4-methyl-5-(2-phosphooxyethyl)-thiazole + 4-amino-2-methyl-5-(diphosphooxymethyl)pyrimidine + H(+) = thiamine phosphate + diphosphate. Its pathway is cofactor biosynthesis; thiamine diphosphate biosynthesis; thiamine phosphate from 4-amino-2-methyl-5-diphosphomethylpyrimidine and 4-methyl-5-(2-phosphoethyl)-thiazole: step 1/1. Condenses 4-methyl-5-(beta-hydroxyethyl)thiazole monophosphate (THZ-P) and 2-methyl-4-amino-5-hydroxymethyl pyrimidine pyrophosphate (HMP-PP) to form thiamine monophosphate (TMP). This Clostridium botulinum (strain Langeland / NCTC 10281 / Type F) protein is Thiamine-phosphate synthase.